The sequence spans 317 residues: Ribosomal RNA small subunit methyltransferase H (317 aa).

S-adenosyl-L-methionine-binding positions include 30-32 (GGH), aspartate 50, tyrosine 74, aspartate 95, and glutamine 102.

This sequence belongs to the methyltransferase superfamily. RsmH family.

Its subcellular location is the cytoplasm. It catalyses the reaction cytidine(1402) in 16S rRNA + S-adenosyl-L-methionine = N(4)-methylcytidine(1402) in 16S rRNA + S-adenosyl-L-homocysteine + H(+). Its function is as follows. Specifically methylates the N4 position of cytidine in position 1402 (C1402) of 16S rRNA. This chain is Ribosomal RNA small subunit methyltransferase H, found in Nitrosomonas europaea (strain ATCC 19718 / CIP 103999 / KCTC 2705 / NBRC 14298).